The chain runs to 157 residues: S-ribosylhomocysteine lyase (157 aa).

The Fe cation site is built by His54, His58, and Cys126.

This sequence belongs to the LuxS family. As to quaternary structure, homodimer. It depends on Fe cation as a cofactor.

The enzyme catalyses S-(5-deoxy-D-ribos-5-yl)-L-homocysteine = (S)-4,5-dihydroxypentane-2,3-dione + L-homocysteine. Functionally, involved in the synthesis of autoinducer 2 (AI-2) which is secreted by bacteria and is used to communicate both the cell density and the metabolic potential of the environment. The regulation of gene expression in response to changes in cell density is called quorum sensing. Catalyzes the transformation of S-ribosylhomocysteine (RHC) to homocysteine (HC) and 4,5-dihydroxy-2,3-pentadione (DPD). This chain is S-ribosylhomocysteine lyase, found in Bacillus pumilus (strain SAFR-032).